An 80-amino-acid polypeptide reads, in one-letter code: Small ribosomal subunit protein bS16c (80 aa).

This sequence belongs to the bacterial ribosomal protein bS16 family.

The protein localises to the plastid. It localises to the chloroplast. This Lotus japonicus (Lotus corniculatus var. japonicus) protein is Small ribosomal subunit protein bS16c.